A 358-amino-acid polypeptide reads, in one-letter code: Aromatic amino acid aminotransferase (358 aa).

Residue lysine 214 is modified to N6-(pyridoxal phosphate)lysine.

It belongs to the class-II pyridoxal-phosphate-dependent aminotransferase family. As to quaternary structure, homodimer. Pyridoxal 5'-phosphate is required as a cofactor.

It catalyses the reaction an aromatic L-alpha-amino acid + 2-oxoglutarate = an aromatic oxo-acid + L-glutamate. Aminotransferase that catalyzes the conversion of aromatic amino acids and 2-oxoglutarate into corresponding aromatic oxo acids and L-glutamate. This is Aromatic amino acid aminotransferase from Rhodococcus opacus (strain B4).